The following is a 148-amino-acid chain: Small ribosomal subunit protein eS6 (148 aa).

The protein belongs to the eukaryotic ribosomal protein eS6 family.

The chain is Small ribosomal subunit protein eS6 from Pyrobaculum neutrophilum (strain DSM 2338 / JCM 9278 / NBRC 100436 / V24Sta) (Thermoproteus neutrophilus).